The chain runs to 509 residues: Putative ATP-dependent RNA helicase QP509L (509 aa).

The Helicase ATP-binding domain maps to 110-262 (KKLLSPYGRF…KIILHHLGQP (153 aa)). Residue 123–130 (LNTGLGKT) coordinates ATP. A DEAH box motif is present at residues 215–218 (DEAH).

Belongs to the DEAD box helicase family. DEAH subfamily.

The catalysed reaction is ATP + H2O = ADP + phosphate + H(+). This Ornithodoros (relapsing fever ticks) protein is Putative ATP-dependent RNA helicase QP509L.